The following is a 96-amino-acid chain: Non-specific lipid-transfer protein 2 (96 aa).

The signal sequence occupies residues 1–27 (MMRKLAVLVLAVAMVAACGGGVVGVAG). 4 disulfides stabilise this stretch: C30–C62, C38–C52, C53–C88, and C64–C95.

Its function is as follows. Transfer lipids across membranes. May play a role in plant defense or in the biosynthesis of cuticle layers. The sequence is that of Non-specific lipid-transfer protein 2 (LTP-2) from Oryza sativa subsp. japonica (Rice).